The following is a 108-amino-acid chain: Integration host factor subunit alpha (108 aa).

This sequence belongs to the bacterial histone-like protein family. As to quaternary structure, heterodimer of an alpha and a beta chain.

Functionally, this protein is one of the two subunits of integration host factor, a specific DNA-binding protein that functions in genetic recombination as well as in transcriptional and translational control. In Rhodopseudomonas palustris (strain BisB18), this protein is Integration host factor subunit alpha.